The primary structure comprises 62 residues: Large ribosomal subunit protein eL24 (62 aa).

Zn(2+)-binding residues include Cys-6, Cys-9, Cys-32, and Cys-36. Residues 6–36 form a C4-type zinc finger; the sequence is CSFCGADIPPGYGIMYVRSDGTVQRFCSRKC.

Belongs to the eukaryotic ribosomal protein eL24 family. Part of the 50S ribosomal subunit. Forms a cluster with proteins L3 and L14. Zn(2+) is required as a cofactor.

Its function is as follows. Binds to the 23S rRNA. In Pyrobaculum calidifontis (strain DSM 21063 / JCM 11548 / VA1), this protein is Large ribosomal subunit protein eL24.